The sequence spans 157 residues: Holo-[acyl-carrier-protein] synthase (157 aa).

Residues Asp8 and Glu59 each coordinate Mg(2+).

This sequence belongs to the P-Pant transferase superfamily. AcpS family. Mg(2+) serves as cofactor.

The protein resides in the cytoplasm. The enzyme catalyses apo-[ACP] + CoA = holo-[ACP] + adenosine 3',5'-bisphosphate + H(+). In terms of biological role, transfers the 4'-phosphopantetheine moiety from coenzyme A to a Ser of acyl-carrier-protein. The chain is Holo-[acyl-carrier-protein] synthase from Gluconobacter oxydans (strain 621H) (Gluconobacter suboxydans).